The primary structure comprises 271 residues: ATP synthase subunit a (271 aa).

5 consecutive transmembrane segments (helical) span residues 31-51 (WDTILTSVIAGVIVVGLGLYM), 89-109 (FVAPMAVTLFVYILLCNWIGV), 124-144 (DINLTLTLALVVIVPMHIVSL), 186-206 (IFSGAIMVSLLALMPPYVLWL), and 216-236 (LGVGVIQAFIFALLTILYYAF). Residues 247 to 271 (DEHADGGDSSSRQASPTPLPAGQVR) are disordered.

Belongs to the ATPase A chain family. In terms of assembly, F-type ATPases have 2 components, CF(1) - the catalytic core - and CF(0) - the membrane proton channel. CF(1) has five subunits: alpha(3), beta(3), gamma(1), delta(1), epsilon(1). CF(0) has three main subunits: a(1), b(2) and c(9-12). The alpha and beta chains form an alternating ring which encloses part of the gamma chain. CF(1) is attached to CF(0) by a central stalk formed by the gamma and epsilon chains, while a peripheral stalk is formed by the delta and b chains.

It is found in the cell membrane. In terms of biological role, key component of the proton channel; it plays a direct role in the translocation of protons across the membrane. The protein is ATP synthase subunit a of Acidothermus cellulolyticus (strain ATCC 43068 / DSM 8971 / 11B).